The chain runs to 295 residues: 3-hydroxy-5-phosphonooxypentane-2,4-dione thiolase (295 aa).

Lys-203 (schiff-base intermediate with substrate) is an active-site residue.

The protein belongs to the DeoC/FbaB aldolase family. In terms of assembly, homodecamer.

It localises to the cytoplasm. The catalysed reaction is dihydroxyacetone phosphate + acetyl-CoA = 3-hydroxy-2,4-dioxopentyl phosphate + CoA. Involved in the degradation of phospho-AI-2, thereby terminating induction of the lsr operon and closing the AI-2 signaling cycle. Catalyzes the transfer of an acetyl moiety from 3-hydroxy-5-phosphonooxypentane-2,4-dione to CoA to form glycerone phosphate and acetyl-CoA. This chain is 3-hydroxy-5-phosphonooxypentane-2,4-dione thiolase, found in Klebsiella pneumoniae subsp. pneumoniae (strain ATCC 700721 / MGH 78578).